Reading from the N-terminus, the 228-residue chain is Urease accessory protein UreF (228 aa).

The protein belongs to the UreF family. As to quaternary structure, ureD, UreF and UreG form a complex that acts as a GTP-hydrolysis-dependent molecular chaperone, activating the urease apoprotein by helping to assemble the nickel containing metallocenter of UreC. The UreE protein probably delivers the nickel.

It is found in the cytoplasm. Functionally, required for maturation of urease via the functional incorporation of the urease nickel metallocenter. The polypeptide is Urease accessory protein UreF (Yersinia enterocolitica serotype O:8 / biotype 1B (strain NCTC 13174 / 8081)).